The sequence spans 507 residues: Alkyl hydroperoxide reductase subunit F (507 aa).

Residue 207–222 participates in FAD binding; the sequence is DVLIVGGGPASGSAAI. Cys-335 and Cys-338 form a disulfide bridge. 347–361 provides a ligand contact to NAD(+); that stretch reads DVAVIGGGNSGVEAA. 467 to 477 provides a ligand contact to FAD; the sequence is TNVPGIFAAGD.

Belongs to the class-II pyridine nucleotide-disulfide oxidoreductase family. Homodimer. Requires FAD as cofactor.

Functionally, serves to protect the cell against DNA damage by alkyl hydroperoxides. It can use either NADH or NADPH as electron donor for direct reduction of redox dyes or of alkyl hydroperoxides when combined with the AhpC protein. In Staphylococcus aureus (strain NCTC 8325 / PS 47), this protein is Alkyl hydroperoxide reductase subunit F (ahpF).